A 156-amino-acid chain; its full sequence is Arginine repressor (156 aa).

It belongs to the ArgR family.

The protein localises to the cytoplasm. It participates in amino-acid biosynthesis; L-arginine biosynthesis [regulation]. Regulates arginine biosynthesis genes. This chain is Arginine repressor, found in Shewanella woodyi (strain ATCC 51908 / MS32).